A 48-amino-acid chain; its full sequence is Glycine-rich RNA-binding protein 2 (48 aa).

This is Glycine-rich RNA-binding protein 2 from Populus euphratica (Euphrates poplar).